Reading from the N-terminus, the 105-residue chain is Large ribosomal subunit protein bL21 (105 aa).

This sequence belongs to the bacterial ribosomal protein bL21 family. As to quaternary structure, part of the 50S ribosomal subunit. Contacts protein L20.

This protein binds to 23S rRNA in the presence of protein L20. In Natranaerobius thermophilus (strain ATCC BAA-1301 / DSM 18059 / JW/NM-WN-LF), this protein is Large ribosomal subunit protein bL21.